A 363-amino-acid polypeptide reads, in one-letter code: Chorismate synthase (363 aa).

Arg48 serves as a coordination point for NADP(+). Residues 125–127 (RSS), 238–239 (NA), Gly278, 293–297 (KPTAS), and Arg319 contribute to the FMN site.

Belongs to the chorismate synthase family. In terms of assembly, homotetramer. The cofactor is FMNH2.

The catalysed reaction is 5-O-(1-carboxyvinyl)-3-phosphoshikimate = chorismate + phosphate. Its pathway is metabolic intermediate biosynthesis; chorismate biosynthesis; chorismate from D-erythrose 4-phosphate and phosphoenolpyruvate: step 7/7. Catalyzes the anti-1,4-elimination of the C-3 phosphate and the C-6 proR hydrogen from 5-enolpyruvylshikimate-3-phosphate (EPSP) to yield chorismate, which is the branch point compound that serves as the starting substrate for the three terminal pathways of aromatic amino acid biosynthesis. This reaction introduces a second double bond into the aromatic ring system. This Acinetobacter baylyi (strain ATCC 33305 / BD413 / ADP1) protein is Chorismate synthase.